The primary structure comprises 933 residues: MAASRLDFGEVETFLDRHPELFEDYLMRKGKQEMVEKWLQRHSQGQGALGPRPSLAGTSSLAHSTCRGGSSVGGGTGPNGSAHSQPLPGGGDCGGVPLSPSWAGGSRGDGNLQRRASQKELRKSFARSKAIHVNRTYDEQVTSRAQEPLSSVRRRALLRKASSLPPTTAHILSALLESRVNLPRYPPTAIDYKCHLKKHNERQFFLELVKDISNDLDLTSLSYKILIFVCLMVDADRCSLFLVEGAAAGKKTLVSKFFDVHAGTPLLPCSSTENSNEVQVPWGKGIIGYVGEHGETVNIPDAYQDRRFNDEIDKLTGYKTKSLLCMPIRSSDGEIIGVAQAINKIPEGAPFTEDDEKVMQMYLPFCGIAISNAQLFAASRKEYERSRALLEVVNDLFEEQTDLEKIVKKIMHRAQTLLKCERCSVLLLEDIESPVVKFTKSFELMSPKCSADAENSFKESMEKSSYSDWLINNSIAELVASTGLPVNISDAYQDPRFDAEADQISGFHIRSVLCVPIWNSNHQIIGVAQVLNRLDGKPFDDADQRLFEAFVIFCGLGINNTIMYDQVKKSWAKQSVALDVLSYHATCSKAEVDKFKAANIPLVSELAIDDIHFDDFSLDVDAMITAALRMFMELGMVQKFKIDYETLCRWLLTVRKNYRMVLYHNWRHAFNVCQLMFAMLTTAGFQDILTEVEILAVIVGCLCHDLDHRGTNNAFQAKSGSALAQLYGTSATLEHHHFNHAVMILQSEGHNIFANLSSKEYSDLMQLLKQSILATDLTLYFERRTEFFELVSKGEYDWNIKNHRDIFRSMLMTACDLGAVTKPWEISRQVAELVTSEFFEQGDRERLELKLTPSAIFDRNRKDELPRLQLEWIDSICMPLYQALVKVNVKLKPMLDSVATNRSKWEELHQKRLLASTASSSPASVMVAKEDRN.

Residues 42 to 125 are disordered; sequence HSQGQGALGP…ASQKELRKSF (84 aa). Phosphoserine is present on residues Ser-162, Ser-163, and Ser-239. 2 GAF domains span residues 217-370 and 402-558; these read DLTS…GIAI and DLEK…GLGI. A 3',5'-cyclic GMP-binding site is contributed by Ser-424. The region spanning 588–912 is the PDEase domain; it reads SKAEVDKFKA…SKWEELHQKR (325 aa). Catalysis depends on His-664, which acts as the Proton donor. Residues His-668, His-704, Asp-705, and Asp-816 each contribute to the a divalent metal cation site.

Belongs to the cyclic nucleotide phosphodiesterase family. Requires a divalent metal cation as cofactor. Isoform 1 is present in prostate, pituitary, heart and liver. It is however not present in testis nor in penis, suggesting that weak inhibition by Tadalafil (Cialis) is not relevant (at protein level). Isoform 2 may be expressed in testis. Isoform 4 is expressed in adrenal cortex.

The protein resides in the cytoplasm. It localises to the cytosol. It carries out the reaction 3',5'-cyclic GMP + H2O = GMP + H(+). The enzyme catalyses 3',5'-cyclic AMP + H2O = AMP + H(+). Inhibited by 3-isobutyl-1-methylxanthine (IBMX), zaprinast and dipyridamole. cGMP acts as an allosteric activator. Weakly inhibited by Sildenafil (Viagra) and Tadalafil (Cialis); however, the fact that the protein is probably absent from testis, suggests that it is not biologically relevant and is not related with erectile dysfunction. Its function is as follows. Plays a role in signal transduction by regulating the intracellular concentration of cyclic nucleotides cAMP and cGMP. Catalyzes the hydrolysis of both cAMP and cGMP to 5'-AMP and 5'-GMP, respectively. The polypeptide is Dual 3',5'-cyclic-AMP and -GMP phosphodiesterase 11A (Homo sapiens (Human)).